A 260-amino-acid polypeptide reads, in one-letter code: Serine/threonine-protein acetyltransferase NGR_a02610 (260 aa).

Residues His-123 and Glu-143 contribute to the active site. His-123 contacts CoA. Lys-180 to Ser-181 is a CoA binding site. Cys-185 is an active-site residue.

This sequence belongs to the acetyltransferase YopJ family.

It catalyses the reaction L-threonyl-[protein] + acetyl-CoA = O-acetyl-L-threonyl-[protein] + CoA. The catalysed reaction is L-seryl-[protein] + acetyl-CoA = O-acetyl-L-seryl-[protein] + CoA. In terms of biological role, serine/threonine-protein acetyltransferase translocated into infected cells, which mediates acetylation of serine and threonine residues of host target proteins. The protein is Serine/threonine-protein acetyltransferase NGR_a02610 of Sinorhizobium fredii (strain NBRC 101917 / NGR234).